A 635-amino-acid chain; its full sequence is Two-component response regulator ARR18 (635 aa).

The Response regulatory domain occupies 19–133 (RVLAVDDNPT…ELQNIWHHVV (115 aa)). Position 70 is a 4-aspartylphosphate (Asp-70). Disordered regions lie at residues 144–196 (LPPS…KKPR) and 323–342 (IQQG…GTYH). Acidic residues predominate over residues 166-186 (SGDEDDSDREEDDGEGSEQDG). Residues 193 to 196 (KKPR) carry the Nuclear localization signal motif. A DNA-binding region (myb-like GARP) is located at residues 196 to 246 (RVVWSQELHQKFVSAVQQLGLDKAVPKKILDLMSIEGLTRENVASHLQKYR).

Belongs to the ARR family. Type-B subfamily. Binds the target DNA as a monomer. In terms of processing, two-component system major event consists of a His-to-Asp phosphorelay between a sensor histidine kinase (HK) and a response regulator (RR). In plants, the His-to-Asp phosphorelay involves an additional intermediate named Histidine-containing phosphotransfer protein (HPt). This multistep phosphorelay consists of a His-Asp-His-Asp sequential transfer of a phosphate group between first a His and an Asp of the HK protein, followed by the transfer to a conserved His of the HPt protein and finally the transfer to an Asp in the receiver domain of the RR protein. As to expression, predominantly expressed in young leaf tissue developing anthers, and siliques.

Its subcellular location is the nucleus. Its function is as follows. Transcriptional activator that binds specifically to the DNA sequence 5'-[AG]GATT-3'. Functions as a response regulator involved in His-to-Asp phosphorelay signal transduction system. Phosphorylation of the Asp residue in the receiver domain activates the ability of the protein to promote the transcription of target genes. Could directly activate some type-A response regulators in response to cytokinins. The polypeptide is Two-component response regulator ARR18 (ARR18) (Arabidopsis thaliana (Mouse-ear cress)).